The primary structure comprises 132 residues: Small ribosomal subunit protein uS8 (132 aa).

The protein belongs to the universal ribosomal protein uS8 family. As to quaternary structure, part of the 30S ribosomal subunit. Contacts proteins S5 and S12.

In terms of biological role, one of the primary rRNA binding proteins, it binds directly to 16S rRNA central domain where it helps coordinate assembly of the platform of the 30S subunit. The sequence is that of Small ribosomal subunit protein uS8 from Mesorhizobium japonicum (strain LMG 29417 / CECT 9101 / MAFF 303099) (Mesorhizobium loti (strain MAFF 303099)).